A 44-amino-acid polypeptide reads, in one-letter code: 2S seed storage albumin protein (44 aa).

Disulfide bonds link Cys-7–Cys-42 and Cys-19–Cys-31.

It belongs to the 2S seed storage albumins family. As to quaternary structure, the mature protein consists of a small and a large chain linked by 2 disulfide bonds.

This is a 2S seed storage protein. Has antifungal activity. Inhibits spore germination in H.sativum (IC(50)=62.5 ug/ml) and P.betae (IC(50)=62.5 ug/ml). Inhibits growth of H.sativum, V.albo-atrum and P.infestans. The sequence is that of 2S seed storage albumin protein from Taraxacum officinale (Common dandelion).